A 319-amino-acid polypeptide reads, in one-letter code: 3'-5' exoribonuclease YhaM (319 aa).

The OB DNA-binding region spans 12–90 (EAVDGYLLIK…QLKIASIRPT (79 aa)). An HD domain is found at 163–279 (HVVSMLRIGK…LHLIDNIDAK (117 aa)).

This sequence belongs to the YhaM family.

Shows a 3'-5' exoribonuclease activity. This chain is 3'-5' exoribonuclease YhaM, found in Shouchella clausii (strain KSM-K16) (Alkalihalobacillus clausii).